We begin with the raw amino-acid sequence, 72 residues long: DNA gyrase inhibitor YacG (72 aa).

Residues cysteine 14, cysteine 17, cysteine 33, and cysteine 37 each contribute to the Zn(2+) site.

Belongs to the DNA gyrase inhibitor YacG family. Interacts with GyrB. Zn(2+) is required as a cofactor.

In terms of biological role, inhibits all the catalytic activities of DNA gyrase by preventing its interaction with DNA. Acts by binding directly to the C-terminal domain of GyrB, which probably disrupts DNA binding by the gyrase. This is DNA gyrase inhibitor YacG from Mannheimia succiniciproducens (strain KCTC 0769BP / MBEL55E).